A 505-amino-acid polypeptide reads, in one-letter code: MEEYPRYLELDRSRKNDFLFPLIYREYIYRLSHDHGLNRSILLENEGHNNKFSLVIIKRLITRIYQQNHLIISANDSNQNPFLRYNKNLYLQMISEGFAVIVEILFCLQLVSSLEESEIVKSHNLRSIHSLFPFLEDKFPHLNYVSDVLVPYPIHLEKLIQTLRYWVKDPSSLHLFRLVVHEEWNWNSLIISKKSISIFPKSNPRFFFFLYNIYVYEYESIFFFLRNQSFYLRSTFSWVLLERIYFYGKLEQFTDVFANDFPSVLCLFKDPFMHYVRYQGKLILASKYTPLLMKKWKYYLVNLGQCHFYVWFQPEKIYINLLSKHSLDFLGYLSRYRLNPSVVRSQMFENSFIIDNAMKKLDTIVPIIPLIGSLAQTNFCNEIGYPVSNPTRAANSSDSDIIARFLRLCRNLFHYYSGSSKKKSLYRLKYILRLSCVKTLACKHKSTVRFFLKRLGSEFLEEFLTEEARVLSLIFPRVSYISRTLYRGKVWYLDIICINDLSNHK.

It belongs to the intron maturase 2 family. MatK subfamily.

It is found in the plastid. The protein localises to the chloroplast. Functionally, usually encoded in the trnK tRNA gene intron. Probably assists in splicing its own and other chloroplast group II introns. The polypeptide is Maturase K (Rhizophora stylosa (Bakau)).